The chain runs to 347 residues: Ferrochelatase (347 aa).

Fe cation is bound by residues histidine 193 and glutamate 273.

This sequence belongs to the ferrochelatase family.

The protein resides in the cytoplasm. The catalysed reaction is heme b + 2 H(+) = protoporphyrin IX + Fe(2+). It participates in porphyrin-containing compound metabolism; protoheme biosynthesis; protoheme from protoporphyrin-IX: step 1/1. Its function is as follows. Catalyzes the ferrous insertion into protoporphyrin IX. The sequence is that of Ferrochelatase from Rickettsia canadensis (strain McKiel).